A 58-amino-acid polypeptide reads, in one-letter code: Small ribosomal subunit protein bS21B (58 aa).

It belongs to the bacterial ribosomal protein bS21 family.

This Trichormus variabilis (strain ATCC 29413 / PCC 7937) (Anabaena variabilis) protein is Small ribosomal subunit protein bS21B.